The primary structure comprises 71 residues: Small ribosomal subunit protein bS21 (71 aa).

The protein belongs to the bacterial ribosomal protein bS21 family.

This chain is Small ribosomal subunit protein bS21, found in Hahella chejuensis (strain KCTC 2396).